A 96-amino-acid polypeptide reads, in one-letter code: Plasminogen-like protein B (96 aa).

Positions 1–19 (MEHKEVVLLLLLFLKSGQG) are cleaved as a signal peptide. One can recognise a PAN domain in the interval 20 to 96 (EPLDDYVNTQ…RMRDAVLFEK (77 aa)). Disulfide bonds link Cys49-Cys73 and Cys53-Cys61.

It is found in the secreted. Functionally, may bind noncovalently to lysine binding sites present in the kringle structures of plasminogen. This may interfere with the binding of fibrin or alpha-2-antiplasmin to plasminogen and may result in the localization of activity at sites necessary for extracellular matrix destruction. This is Plasminogen-like protein B (PLGLB1) from Homo sapiens (Human).